Consider the following 185-residue polypeptide: Nuclear transcription factor Y subunit B-3 (185 aa).

Over residues 1–36 (MADGPGSPGGGGGSHESGSPRGGGGGGGGGGGGGGV) the composition is skewed to gly residues. The segment at 1-39 (MADGPGSPGGGGGSHESGSPRGGGGGGGGGGGGGGVREQ) is disordered. The DNA-binding element occupies 43–49 (LPIANIS). Residues 70–81 (VQECVSEFISFI) form a subunit association domain (SAD) region. The disordered stretch occupies residues 145 to 164 (KDVLGSHGGSSSSAQGMGQQ). Residues 153 to 164 (GSSSSAQGMGQQ) are compositionally biased toward low complexity.

The protein belongs to the NFYB/HAP3 subunit family. In terms of assembly, heterotrimeric transcription factor composed of three components, NF-YA, NF-YB and NF-YC. NF-YB and NF-YC must interact and dimerize for NF-YA association and DNA binding. In terms of tissue distribution, ubiquitous.

The protein localises to the nucleus. Component of the NF-Y/HAP transcription factor complex. The NF-Y complex stimulates the transcription of various genes by recognizing and binding to a CCAAT motif in promoters. May regulate the expression of photosynthetic genes, and may be involved in chloroplast and amyloplast development. This is Nuclear transcription factor Y subunit B-3 (NFYB3) from Oryza sativa subsp. japonica (Rice).